The sequence spans 374 residues: Putative glutamate--cysteine ligase 2 (374 aa).

It belongs to the glutamate--cysteine ligase type 2 family. YbdK subfamily.

It catalyses the reaction L-cysteine + L-glutamate + ATP = gamma-L-glutamyl-L-cysteine + ADP + phosphate + H(+). In terms of biological role, ATP-dependent carboxylate-amine ligase which exhibits weak glutamate--cysteine ligase activity. The chain is Putative glutamate--cysteine ligase 2 from Acidovorax ebreus (strain TPSY) (Diaphorobacter sp. (strain TPSY)).